Here is a 311-residue protein sequence, read N- to C-terminus: Systemic RNA interference defective protein 2 (311 aa).

Residues 1–20 (MPRFVYFCFALIALLPISWT) form the signal peptide. Residues 21-188 (MDGILITDVE…EETKTVVNKN (168 aa)) lie on the Extracellular side of the membrane. The chain crosses the membrane as a helical span at residues 189–209 (GGAVAVAVIEGIALIAILAFL). The Cytoplasmic portion of the chain corresponds to 210 to 311 (GYRTMVNHKL…NDPFATLESW (102 aa)). The span at 287-301 (NSSAAQPSTTSNGQF) shows a compositional bias: polar residues. Residues 287 to 311 (NSSAAQPSTTSNGQFNDPFATLESW) form a disordered region.

As to expression, expressed in the intestinal lumen. Also present, at lower levels, in the excretory duct cells.

Its subcellular location is the apical cell membrane. The protein resides in the cytoplasm. Its function is as follows. Plays a role in RNA-mediated gene silencing by mediating endocytic uptake of double-stranded RNA (dsRNA) ingested from the environment into intestinal cells from the intestinal lumen. Selective for dsRNAs of at least 50 bp. Required for avoidance behavior induced by small RNAs derived from pathogenic bacteria such as P.aeruginosa. This chain is Systemic RNA interference defective protein 2, found in Caenorhabditis elegans.